Here is a 148-residue protein sequence, read N- to C-terminus: Nucleoside diphosphate kinase (148 aa).

6 residues coordinate ATP: K9, F57, R85, T91, R102, and N112. H115 serves as the catalytic Pros-phosphohistidine intermediate.

The protein belongs to the NDK family. In terms of assembly, homotetramer. Mg(2+) is required as a cofactor.

The protein resides in the cytoplasm. The catalysed reaction is a 2'-deoxyribonucleoside 5'-diphosphate + ATP = a 2'-deoxyribonucleoside 5'-triphosphate + ADP. It catalyses the reaction a ribonucleoside 5'-diphosphate + ATP = a ribonucleoside 5'-triphosphate + ADP. Its function is as follows. Major role in the synthesis of nucleoside triphosphates other than ATP. The ATP gamma phosphate is transferred to the NDP beta phosphate via a ping-pong mechanism, using a phosphorylated active-site intermediate. In Macrococcus caseolyticus (strain JCSC5402) (Macrococcoides caseolyticum), this protein is Nucleoside diphosphate kinase.